Consider the following 590-residue polypeptide: Arginine--tRNA ligase (590 aa).

The short motif at 130 to 140 (ANPTGPMHVGH) is the 'HIGH' region element.

The protein belongs to the class-I aminoacyl-tRNA synthetase family. Monomer.

Its subcellular location is the cytoplasm. It catalyses the reaction tRNA(Arg) + L-arginine + ATP = L-arginyl-tRNA(Arg) + AMP + diphosphate. This chain is Arginine--tRNA ligase, found in Methylobacterium nodulans (strain LMG 21967 / CNCM I-2342 / ORS 2060).